Reading from the N-terminus, the 428-residue chain is Histidinol dehydrogenase (428 aa).

Residues Tyr125, Gln186, and Asn209 each coordinate NAD(+). Substrate contacts are provided by Ser232, Gln254, and His257. Residues Gln254 and His257 each coordinate Zn(2+). Residues Glu322 and His323 each act as proton acceptor in the active site. 4 residues coordinate substrate: His323, Asp356, Glu410, and His415. Residue Asp356 coordinates Zn(2+). His415 provides a ligand contact to Zn(2+).

The protein belongs to the histidinol dehydrogenase family. The cofactor is Zn(2+).

The catalysed reaction is L-histidinol + 2 NAD(+) + H2O = L-histidine + 2 NADH + 3 H(+). The protein operates within amino-acid biosynthesis; L-histidine biosynthesis; L-histidine from 5-phospho-alpha-D-ribose 1-diphosphate: step 9/9. In terms of biological role, catalyzes the sequential NAD-dependent oxidations of L-histidinol to L-histidinaldehyde and then to L-histidine. The protein is Histidinol dehydrogenase of Lactiplantibacillus plantarum (strain ATCC BAA-793 / NCIMB 8826 / WCFS1) (Lactobacillus plantarum).